We begin with the raw amino-acid sequence, 99 residues long: Large ribosomal subunit protein uL23 (99 aa).

This sequence belongs to the universal ribosomal protein uL23 family. In terms of assembly, part of the 50S ribosomal subunit. Contacts protein L29, and trigger factor when it is bound to the ribosome.

Its function is as follows. One of the early assembly proteins it binds 23S rRNA. One of the proteins that surrounds the polypeptide exit tunnel on the outside of the ribosome. Forms the main docking site for trigger factor binding to the ribosome. This chain is Large ribosomal subunit protein uL23, found in Pseudomonas fluorescens (strain SBW25).